Consider the following 209-residue polypeptide: Uracil phosphoribosyltransferase (209 aa).

5-phospho-alpha-D-ribose 1-diphosphate is bound by residues Arg79, Arg104, and 131 to 139 (DPMLATGNS). Residues Ile194 and 199 to 201 (GDA) each bind uracil. Asp200 provides a ligand contact to 5-phospho-alpha-D-ribose 1-diphosphate.

The protein belongs to the UPRTase family. Mg(2+) is required as a cofactor.

The enzyme catalyses UMP + diphosphate = 5-phospho-alpha-D-ribose 1-diphosphate + uracil. It functions in the pathway pyrimidine metabolism; UMP biosynthesis via salvage pathway; UMP from uracil: step 1/1. Allosterically activated by GTP. In terms of biological role, catalyzes the conversion of uracil and 5-phospho-alpha-D-ribose 1-diphosphate (PRPP) to UMP and diphosphate. The chain is Uracil phosphoribosyltransferase from Delftia acidovorans (strain DSM 14801 / SPH-1).